The following is a 330-amino-acid chain: D-cysteine desulfhydrase (330 aa).

K52 carries the post-translational modification N6-(pyridoxal phosphate)lysine.

The protein belongs to the ACC deaminase/D-cysteine desulfhydrase family. Homodimer. Pyridoxal 5'-phosphate serves as cofactor.

It carries out the reaction D-cysteine + H2O = hydrogen sulfide + pyruvate + NH4(+) + H(+). In terms of biological role, catalyzes the alpha,beta-elimination reaction of D-cysteine and of several D-cysteine derivatives. It could be a defense mechanism against D-cysteine. In Yersinia enterocolitica serotype O:8 / biotype 1B (strain NCTC 13174 / 8081), this protein is D-cysteine desulfhydrase.